The following is a 125-amino-acid chain: Protein ApaG (125 aa).

The 125-residue stretch at 1-125 (MIEQPRICVQ…FRLAIPALIH (125 aa)) folds into the ApaG domain.

The chain is Protein ApaG from Yersinia pestis bv. Antiqua (strain Antiqua).